The following is a 408-amino-acid chain: Chaperone protein dnaJ 1, mitochondrial (408 aa).

The transit peptide at 1-26 directs the protein to the mitochondrion; it reads MRRFNWVLRHVQARRTFDSAIGLRQG. Positions 48-113 constitute a J domain; that stretch reads NYYDVLGVSP…ERREEYDKLQ (66 aa). The CR-type zinc-finger motif lies at 173–247; that stretch reads GCTKRLSFDA…CRGSGIVEGT (75 aa). Zn(2+)-binding residues include Cys-186, Cys-189, Cys-203, Cys-206, Cys-221, Cys-224, Cys-235, and Cys-238. CXXCXGXG motif repeat units lie at residues 186-193, 203-210, 221-228, and 235-242; these read CDSCDGLG, CPTCRGVG, CQTCKGTG, and CMSCRGSG.

This sequence belongs to the DnaJ family. B/II subfamily. In terms of assembly, homodimer. Requires Zn(2+) as cofactor. In terms of tissue distribution, ubiquitous.

The protein localises to the mitochondrion. Its function is as follows. Plays a continuous role in plant development probably in the structural organization of compartments. The protein is Chaperone protein dnaJ 1, mitochondrial (ATJ1) of Arabidopsis thaliana (Mouse-ear cress).